Reading from the N-terminus, the 1242-residue chain is ATP-dependent helicase/nuclease subunit A (1242 aa).

The UvrD-like helicase ATP-binding domain maps to 13–486; it reads SQWTDDQWKA…IDLAKNFRSR (474 aa). 34–41 is a binding site for ATP; sequence AAAGSGKT. In terms of domain architecture, UvrD-like helicase C-terminal spans 506–806; the sequence is GEIEYDADAE…RIMTIHKSKG (301 aa).

The protein belongs to the helicase family. AddA subfamily. In terms of assembly, heterodimer of AddA and AddB/RexB. It depends on Mg(2+) as a cofactor.

It carries out the reaction Couples ATP hydrolysis with the unwinding of duplex DNA by translocating in the 3'-5' direction.. The catalysed reaction is ATP + H2O = ADP + phosphate + H(+). Functionally, the heterodimer acts as both an ATP-dependent DNA helicase and an ATP-dependent, dual-direction single-stranded exonuclease. Recognizes the chi site generating a DNA molecule suitable for the initiation of homologous recombination. The AddA nuclease domain is required for chi fragment generation; this subunit has the helicase and 3' -&gt; 5' nuclease activities. This Bacillus cytotoxicus (strain DSM 22905 / CIP 110041 / 391-98 / NVH 391-98) protein is ATP-dependent helicase/nuclease subunit A.